The following is a 521-amino-acid chain: Alkyl hydroperoxide reductase subunit F (521 aa).

Position 53 is an N6-acetyllysine (Lys-53). 214 to 229 contributes to the FAD binding site; it reads DVLIVGSGPAGAAAAI. Cys-345 and Cys-348 are oxidised to a cystine. Lys-354 carries the N6-acetyllysine modification. An NAD(+)-binding site is contributed by 357 to 371; the sequence is RVAVIGGGNSGVEAA. An FAD-binding site is contributed by 478–488; the sequence is TNVKGVFAAGD.

The protein belongs to the class-II pyridine nucleotide-disulfide oxidoreductase family. Homodimer. FAD is required as a cofactor.

Serves to protect the cell against DNA damage by alkyl hydroperoxides. It can use either NADH or NADPH as electron donor for direct reduction of redox dyes or of alkyl hydroperoxides when combined with the AhpC protein. The protein is Alkyl hydroperoxide reductase subunit F (ahpF) of Escherichia coli (strain K12).